We begin with the raw amino-acid sequence, 208 residues long: Imidazole glycerol phosphate synthase subunit HisH (208 aa).

The Glutamine amidotransferase type-1 domain occupies 1–206; the sequence is MIVIIDYDTG…KEVTYSCKSS (206 aa). Catalysis depends on C79, which acts as the Nucleophile. Residues H181 and E183 contribute to the active site.

In terms of assembly, heterodimer of HisH and HisF.

Its subcellular location is the cytoplasm. The catalysed reaction is 5-[(5-phospho-1-deoxy-D-ribulos-1-ylimino)methylamino]-1-(5-phospho-beta-D-ribosyl)imidazole-4-carboxamide + L-glutamine = D-erythro-1-(imidazol-4-yl)glycerol 3-phosphate + 5-amino-1-(5-phospho-beta-D-ribosyl)imidazole-4-carboxamide + L-glutamate + H(+). The enzyme catalyses L-glutamine + H2O = L-glutamate + NH4(+). Its pathway is amino-acid biosynthesis; L-histidine biosynthesis; L-histidine from 5-phospho-alpha-D-ribose 1-diphosphate: step 5/9. In terms of biological role, IGPS catalyzes the conversion of PRFAR and glutamine to IGP, AICAR and glutamate. The HisH subunit catalyzes the hydrolysis of glutamine to glutamate and ammonia as part of the synthesis of IGP and AICAR. The resulting ammonia molecule is channeled to the active site of HisF. The protein is Imidazole glycerol phosphate synthase subunit HisH of Listeria monocytogenes serotype 4a (strain HCC23).